The chain runs to 380 residues: Mitogen-activated protein kinase 3 (380 aa).

At Ala-2 the chain carries N-acetylalanine. Residues 43 to 331 form the Protein kinase domain; it reads YTQLQYIGEG…VEEALAHPYL (289 aa). Residues 49–57 and Lys-72 contribute to the ATP site; that span reads IGEGAYGMV. The active-site Proton acceptor is the Asp-167. Thr-199 bears the Phosphothreonine mark. Thr-203 carries the phosphothreonine; by MAP2K1 and MAP2K2 modification. The TXY motif lies at 203-205; the sequence is TEY. Residue Tyr-205 is modified to Phosphotyrosine; by MAP2K1 and MAP2K2. Thr-208 carries the post-translational modification Phosphothreonine; by autocatalysis.

Belongs to the protein kinase superfamily. CMGC Ser/Thr protein kinase family. MAP kinase subfamily. In terms of assembly, binds both upstream activators and downstream substrates in multimolecular complexes. Found in a complex with at least BRAF, HRAS, MAP2K1/MEK1, MAPK3 and RGS14. Interacts with ADAM15, ARRB2, CANX, DAPK1 (via death domain), HSF4, IER3, MAP2K1/MEK1, MORG1, NISCH, PEA15, SGK1 and MKNK2. MKNK2 isoform 1 binding prevents from dephosphorylation and inactivation. Interacts with TPR. Interacts with HSF1 (via D domain and preferentially with hyperphosphorylated form); this interaction occurs upon heat shock. Interacts with CDKN2AIP. Interacts with CAVIN4. Interacts with GIT1; this interaction is necessary for MAPK3 localization to focal adhesions. Interacts with ZNF263. Interacts with EBF4. Requires Mg(2+) as cofactor. Phosphorylated upon FLT3 and KIT signaling. Ligand-activated ALK induces tyrosine phosphorylation. Dephosphorylated by PTPRJ at Tyr-205. Dually phosphorylated on Thr-203 and Tyr-205, which activates the enzyme. In terms of processing, ubiquitinated by TRIM15 via 'Lys-63'-linked ubiquitination; leading to activation. Deubiquitinated by CYLD. Highest levels within the nervous system, expressed in different tissues, mostly in intestine, placenta and lung.

The protein resides in the cytoplasm. The protein localises to the nucleus. Its subcellular location is the membrane. It localises to the caveola. It is found in the cell junction. The protein resides in the focal adhesion. The enzyme catalyses L-seryl-[protein] + ATP = O-phospho-L-seryl-[protein] + ADP + H(+). It catalyses the reaction L-threonyl-[protein] + ATP = O-phospho-L-threonyl-[protein] + ADP + H(+). With respect to regulation, phosphorylated by MAP2K1/MEK1 and MAP2K2/MEK2 on Thr-203 and Tyr-205 in response to external stimuli like insulin or NGF. Both phosphorylations are required for activity. This phosphorylation causes dramatic conformational changes, which enable full activation and interaction of MAPK1/ERK2 with its substrates. Dephosphorylated and inactivated by DUSP3, DUSP6 and DUSP9. Serine/threonine kinase which acts as an essential component of the MAP kinase signal transduction pathway. MAPK1/ERK2 and MAPK3/ERK1 are the 2 MAPKs which play an important role in the MAPK/ERK cascade. They participate also in a signaling cascade initiated by activated KIT and KITLG/SCF. Depending on the cellular context, the MAPK/ERK cascade mediates diverse biological functions such as cell growth, adhesion, survival and differentiation through the regulation of transcription, translation, cytoskeletal rearrangements. The MAPK/ERK cascade also plays a role in initiation and regulation of meiosis, mitosis, and postmitotic functions in differentiated cells by phosphorylating a number of transcription factors. About 160 substrates have already been discovered for ERKs. Many of these substrates are localized in the nucleus, and seem to participate in the regulation of transcription upon stimulation. However, other substrates are found in the cytosol as well as in other cellular organelles, and those are responsible for processes such as translation, mitosis and apoptosis. Moreover, the MAPK/ERK cascade is also involved in the regulation of the endosomal dynamics, including lysosome processing and endosome cycling through the perinuclear recycling compartment (PNRC); as well as in the fragmentation of the Golgi apparatus during mitosis. The substrates include transcription factors (such as ATF2, BCL6, ELK1, ERF, FOS, HSF4 or SPZ1), cytoskeletal elements (such as CANX, CTTN, GJA1, MAP2, MAPT, PXN, SORBS3 or STMN1), regulators of apoptosis (such as BAD, BTG2, CASP9, DAPK1, IER3, MCL1 or PPARG), regulators of translation (such as EIF4EBP1) and a variety of other signaling-related molecules (like ARHGEF2, DEPTOR, FRS2 or GRB10). Protein kinases (such as RAF1, RPS6KA1/RSK1, RPS6KA3/RSK2, RPS6KA2/RSK3, RPS6KA6/RSK4, SYK, MKNK1/MNK1, MKNK2/MNK2, RPS6KA5/MSK1, RPS6KA4/MSK2, MAPKAPK3 or MAPKAPK5) and phosphatases (such as DUSP1, DUSP4, DUSP6 or DUSP16) are other substrates which enable the propagation the MAPK/ERK signal to additional cytosolic and nuclear targets, thereby extending the specificity of the cascade. The sequence is that of Mitogen-activated protein kinase 3 (Mapk3) from Rattus norvegicus (Rat).